The sequence spans 112 residues: uncharacterized protein (112 aa).

A helical membrane pass occupies residues 85–105; sequence IVQLIILFAIIITNPNAIELI.

The protein belongs to the M.jannaschii MJ0023/MJ0349/MJ1072/MJ1074/MJ1107/MJECL16 family.

Its subcellular location is the membrane. This is an uncharacterized protein from Methanocaldococcus jannaschii (strain ATCC 43067 / DSM 2661 / JAL-1 / JCM 10045 / NBRC 100440) (Methanococcus jannaschii).